A 408-amino-acid chain; its full sequence is E3 ubiquitin-protein ligase IE2 (408 aa).

The segment covering 1-10 (MSRQINAATP) has biased composition (polar residues). Disordered stretches follow at residues 1 to 67 (MSRQ…ENVQ) and 176 to 199 (QSPD…QSEP). Over residues 13–25 (SRRHRLSLSRRRI) the composition is skewed to basic residues. Residues 30–47 (SPEAQPSSSSRSQPSSSS) show a composition bias toward low complexity. Repeat copies occupy residues 34-41 (QPSSSSRS), 42-49 (QPSSSSRS), 51-54 (RRQE), and 55-58 (RRQE). Residues 34–49 (QPSSSSRSQPSSSSRS) are 2 X 8 AA tandem repeats of Q-P-S-S-S-S-R-S. The tract at residues 51–58 (RRQERRQE) is 2 X 4 AA tandem repeats of R-R-Q-E. Residues 183–197 (SPQSPQPQQQQQQQS) show a composition bias toward low complexity. An RING-type zinc finger spans residues 207–255 (CNICFTTFKDTKNVNSSFVTSIHCNHAVCFKCYVKIIMDNSVYKCFCSA).

It belongs to the alphabaculovirus IE2 protein family. As to quaternary structure, homooligomer. Auto-ubiquitinated.

It is found in the host nucleus. It catalyses the reaction S-ubiquitinyl-[E2 ubiquitin-conjugating enzyme]-L-cysteine + [acceptor protein]-L-lysine = [E2 ubiquitin-conjugating enzyme]-L-cysteine + N(6)-ubiquitinyl-[acceptor protein]-L-lysine.. Its function is as follows. RING-finger E3 ubiquitin ligase that plays an important regulatory role during the initial stages of infection. Migrates to specific nuclear foci early in infection supposely to prepare the sites for viral transcription and replication by targeting and ubiquitinating host proteins. Acts as a transcriptional activator and activates a number of viral promoters including itself, IE1 and the promoter of 39K gene. The chain is E3 ubiquitin-protein ligase IE2 (IE2) from Lepidoptera (butterflies and moths).